We begin with the raw amino-acid sequence, 214 residues long: NADH-quinone oxidoreductase subunit C (214 aa).

Belongs to the complex I 30 kDa subunit family. As to quaternary structure, NDH-1 is composed of 14 different subunits. Subunits NuoB, C, D, E, F, and G constitute the peripheral sector of the complex.

The protein localises to the cell inner membrane. It catalyses the reaction a quinone + NADH + 5 H(+)(in) = a quinol + NAD(+) + 4 H(+)(out). NDH-1 shuttles electrons from NADH, via FMN and iron-sulfur (Fe-S) centers, to quinones in the respiratory chain. The immediate electron acceptor for the enzyme in this species is believed to be ubiquinone. Couples the redox reaction to proton translocation (for every two electrons transferred, four hydrogen ions are translocated across the cytoplasmic membrane), and thus conserves the redox energy in a proton gradient. The protein is NADH-quinone oxidoreductase subunit C of Francisella tularensis subsp. mediasiatica (strain FSC147).